Consider the following 697-residue polypeptide: UBA domain-containing protein 7 (697 aa).

Positions 1 to 94 (MDDLLDFNFY…STPKSSNYDP (94 aa)) are disordered. The segment covering 13 to 32 (STPSNQNNYSNNNSRTPSYS) has biased composition (low complexity). The segment covering 62 to 77 (KKTDNKISLKELERQK) has biased composition (basic and acidic residues). Residues 81-92 (PDSNSTPKSSNY) show a composition bias toward polar residues. A UBA domain is found at 181–221 (KLSSNEMYEKLRDLGFSDDQSRLALENSGSLEDAIEYILEK). Residues 306–346 (PEILPKTPIPKRKPHKVPMNEKVSEDRITTNQSRSGNDESS) form a disordered region. Over residues 323–333 (PMNEKVSEDRI) the composition is skewed to basic and acidic residues. Over residues 334-345 (TTNQSRSGNDES) the composition is skewed to polar residues. Residues 412–445 (VEEQQSTGNELFRKGDFSQAIEEFTNSLSQLPAK) form a TPR repeat. The interval 547 to 573 (ISSHSSESHSKRTTQQPKSTPNHTNIK) is disordered. The span at 559-573 (TTQQPKSTPNHTNIK) shows a compositional bias: polar residues. The 64-residue stretch at 633-696 (CRWQKVSLSE…AWELFKQQND (64 aa)) folds into the J domain.

The sequence is that of UBA domain-containing protein 7 (ucp7) from Schizosaccharomyces pombe (strain 972 / ATCC 24843) (Fission yeast).